Reading from the N-terminus, the 942-residue chain is Small RNA 2'-O-methyltransferase (942 aa).

In terms of domain architecture, DRBM spans 19–87 (FGAKASYTVE…AELALDKLGI (69 aa)). The HTH La-type RNA-binding domain occupies 93 to 204 (DLTVDEARDE…KNAYPSEIVE (112 aa)). A compositionally biased stretch (acidic residues) spans 505-514 (EQSCDTDDDQ). Disordered stretches follow at residues 505 to 542 (EQSCDTDDDQDTKSSSPNVFAAPPILQKEHSSESKNTN) and 571 to 596 (PEYSSDGESPREDNESNEEMESEYSA). S-adenosyl-L-methionine is bound by residues S726, D745, 778-779 (SI), and L795. 3 residues coordinate Mg(2+): E796, E799, and H800. The disordered stretch occupies residues 837–856 (RSTPETQEENNSEPQLPKFR). Position 860 (H860) interacts with Mg(2+).

It belongs to the methyltransferase superfamily. HEN1 family. As to quaternary structure, binds small RNA duplexes as monomer. It depends on Mg(2+) as a cofactor. Expressed in stems, leaves and inflorescences.

The protein resides in the nucleus. It carries out the reaction small RNA 3'-end nucleotide + S-adenosyl-L-methionine = small RNA 3'-end 2'-O-methylnucleotide + S-adenosyl-L-homocysteine + H(+). Methyltransferase that adds a methyl group to the ribose of the last nucleotide of small RNAs (sRNAs). This protects the 3'-end of sRNAs from uridylation activity and subsequent degradation. Can methylate 3'-end of microRNAs (miRNAs), small interfering RNAs (siRNas) and trans-acting small interfering RNAs (ta-siRNAs). Involved in plant development through its role in small RNAs processing. Required for the specification of reproductive organ identities and the probable repression of A class genes. May control floral determinacy possibly by regulating the expression of the C class floral homeotic gene AGAMOUS (AG). This chain is Small RNA 2'-O-methyltransferase (HEN1), found in Arabidopsis thaliana (Mouse-ear cress).